A 328-amino-acid chain; its full sequence is Phosphate acyltransferase (328 aa).

The protein belongs to the PlsX family. Homodimer. Probably interacts with PlsY.

It localises to the cytoplasm. It catalyses the reaction a fatty acyl-[ACP] + phosphate = an acyl phosphate + holo-[ACP]. It participates in lipid metabolism; phospholipid metabolism. In terms of biological role, catalyzes the reversible formation of acyl-phosphate (acyl-PO(4)) from acyl-[acyl-carrier-protein] (acyl-ACP). This enzyme utilizes acyl-ACP as fatty acyl donor, but not acyl-CoA. This Campylobacter jejuni subsp. doylei (strain ATCC BAA-1458 / RM4099 / 269.97) protein is Phosphate acyltransferase.